We begin with the raw amino-acid sequence, 185 residues long: UPF0301 protein HCH_00550 (185 aa).

This sequence belongs to the UPF0301 (AlgH) family.

The sequence is that of UPF0301 protein HCH_00550 from Hahella chejuensis (strain KCTC 2396).